The sequence spans 380 residues: Probable transposase for insertion sequence element IS701 (380 aa).

Functionally, involved in the transposition of the insertion sequence. This is Probable transposase for insertion sequence element IS701 from Microchaete diplosiphon (Fremyella diplosiphon).